A 263-amino-acid chain; its full sequence is Shikimate dehydrogenase (NADP(+)) (263 aa).

Shikimate is bound by residues 16 to 18 and threonine 65; that span reads SKS. The Proton acceptor role is filled by lysine 69. Shikimate is bound by residues asparagine 90 and aspartate 105. Residues 125–129 and leucine 208 each bind NADP(+); that span reads GSGGS. Shikimate is bound at residue tyrosine 210. Glycine 230 contacts NADP(+).

It belongs to the shikimate dehydrogenase family. As to quaternary structure, homodimer.

It carries out the reaction shikimate + NADP(+) = 3-dehydroshikimate + NADPH + H(+). Its pathway is metabolic intermediate biosynthesis; chorismate biosynthesis; chorismate from D-erythrose 4-phosphate and phosphoenolpyruvate: step 4/7. Functionally, involved in the biosynthesis of the chorismate, which leads to the biosynthesis of aromatic amino acids. Catalyzes the reversible NADPH linked reduction of 3-dehydroshikimate (DHSA) to yield shikimate (SA). The sequence is that of Shikimate dehydrogenase (NADP(+)) from Helicobacter pylori (strain P12).